Reading from the N-terminus, the 56-residue chain is Small ribosomal subunit protein uS14 (56 aa).

Zn(2+) is bound by residues C21, C24, C39, and C42.

This sequence belongs to the universal ribosomal protein uS14 family. As to quaternary structure, component of the 40S small ribosomal subunit. Zn(2+) serves as cofactor.

It is found in the cytoplasm. The protein resides in the cytosol. It localises to the rough endoplasmic reticulum. In Ixodes scapularis (Black-legged tick), this protein is Small ribosomal subunit protein uS14 (RpS29).